We begin with the raw amino-acid sequence, 2546 residues long: Formin-J (2546 aa).

13 disordered regions span residues 1-40 (MEEN…SFVK), 61-108 (ENSN…PLSE), 188-270 (KNIT…PNSA), 369-414 (TTNN…SSSS), 502-541 (TNSF…TPNS), 802-849 (SSIS…NTRK), 879-898 (TSVP…NNNN), 987-1101 (TTNN…GGIG), 1485-1529 (PKSK…ASLS), 1558-1601 (KRSK…FKSP), 1659-1775 (INNI…KVNS), 1840-1869 (VPTT…ETQS), and 2014-2033 (SNLS…SSLE). Low complexity-rich tracts occupy residues 16–37 (NNNE…SSSS) and 62–98 (NSNN…NSTS). Polar residues-rich tracts occupy residues 99 to 108 (GSKDNTPLSE) and 188 to 198 (KNITPSKNNSP). Composition is skewed to low complexity over residues 203–237 (NNNN…NNNN) and 247–270 (NKNS…PNSA). Residues 377-389 (AESLTTYSESSEI) show a composition bias toward polar residues. Low complexity-rich tracts occupy residues 390–414 (STDS…SSSS) and 502–513 (TNSFGSSTTTTI). Positions 391 to 444 (TDSTGVCSSSSSTSSTLSSKSSSSSSFNKFMEFLLIYIEDNDSTNGTWVNGNKL) constitute an FHA domain. The region spanning 457–963 (KITLSTPDFS…SSISNEQEYQ (507 aa)) is the GBD/FH3 domain. 2 stretches are compositionally biased toward polar residues: residues 879–891 (TSVP…KNPL) and 992–1007 (SSAK…NKSP). Residues 1033-1042 (VPPPPPPPPG) show a composition bias toward pro residues. A compositionally biased stretch (low complexity) spans 1043 to 1056 (GNNNNESDVPSSSG). The span at 1057-1097 (GPPPPPPPPPPPGKSSGGGPPPPPPPPPKGGKGGPPPPPPI) shows a compositional bias: pro residues. In terms of domain architecture, FH1 spans 1072–1098 (SGGGPPPPPPPPPKGGKGGPPPPPPIG). The 390-residue stretch at 1106–1495 (KVKEEQPSVP…KSKKYQEQQN (390 aa)) folds into the FH2 domain. Residues 1492–1502 (EQQNKPTQNND) show a composition bias toward polar residues. Low complexity predominate over residues 1507–1529 (SKLSNLPSSSSINDESSSSASLS). Residues 1563 to 1593 (EQEPVVEPIQITPKVGSAASAEPSPSIKSRD) form the DAD domain. Low complexity predominate over residues 1665–1679 (SSSSSSSSSSSSSSS). Over residues 1687–1717 (HNTESEIKKEFISNSSMDKDKEKIKEKEKGT) the composition is skewed to basic and acidic residues. Residues 1732 to 1745 (KSTTTSPSSSSSKK) show a composition bias toward low complexity. A compositionally biased stretch (polar residues) spans 1746–1757 (QIPSLSECLQES). Composition is skewed to low complexity over residues 1763-1775 (RSSS…KVNS) and 1841-1853 (PTTT…TTQT). Residues 2067-2118 (IDDNQQKQQKQQQQQQQQQQQQQQLPQPQQQQQQQQQQQQQQQQQQQQQQQQ) are a coiled coil. Over residues 2121-2154 (QQSTTTTTISTHHPQLKQVQPQSPSSLSQQPTQQ) the composition is skewed to low complexity. 3 disordered regions span residues 2121-2369 (QQST…PKTV), 2381-2473 (SHKK…SYSS), and 2485-2510 (SPSS…LKTP). Positions 2160 to 2179 (QPSSPLQSHYKPQQKPQTTY) are enriched in polar residues. Low complexity-rich tracts occupy residues 2188–2206 (ANPF…SNAS) and 2237–2256 (SSAS…TPLS). Residues 2274 to 2287 (TPPSSSISNSTATT) are compositionally biased toward polar residues. The span at 2302–2315 (SPSSSSLEQSSNAS) shows a compositional bias: low complexity. Residues 2332–2342 (FKKHKKSHSKS) are compositionally biased toward basic residues. Low complexity-rich tracts occupy residues 2388-2439 (VDQS…SSSS), 2459-2473 (NISS…SYSS), and 2485-2497 (SPSS…KPSP). The span at 2499-2508 (AVSSTSSTLK) shows a compositional bias: polar residues.

It belongs to the formin homology family. Diaphanous subfamily. Interacts (via GBD/FH3 domain) with activated Rho-GTPases.

Functionally, formins play an important role in the nucleation of actin and the formation of linear actin filaments. The chain is Formin-J (forJ) from Dictyostelium discoideum (Social amoeba).